The following is a 124-amino-acid chain: Small ribosomal subunit protein uS12 (124 aa).

The tract at residues 1–25 is disordered; it reads MARINQLVRKPRRARAKKSDVPALE. At Asp89 the chain carries 3-methylthioaspartic acid. Residues 103–124 form a disordered region; the sequence is DTAGVSGRRRGRSKYGEKKPKE.

It belongs to the universal ribosomal protein uS12 family. Part of the 30S ribosomal subunit. Contacts proteins S8 and S17. May interact with IF1 in the 30S initiation complex.

Its function is as follows. With S4 and S5 plays an important role in translational accuracy. Interacts with and stabilizes bases of the 16S rRNA that are involved in tRNA selection in the A site and with the mRNA backbone. Located at the interface of the 30S and 50S subunits, it traverses the body of the 30S subunit contacting proteins on the other side and probably holding the rRNA structure together. The combined cluster of proteins S8, S12 and S17 appears to hold together the shoulder and platform of the 30S subunit. The protein is Small ribosomal subunit protein uS12 of Coxiella burnetii (strain Dugway 5J108-111).